We begin with the raw amino-acid sequence, 276 residues long: Undecaprenyl-diphosphatase (276 aa).

8 consecutive transmembrane segments (helical) span residues 1 to 21 (MSWLQVIVLAVVQGLTEFLPV), 39 to 59 (AGASFTAVTQLGTEVAVLVYF), 84 to 104 (YRLGWYVIIGTIPIGVIGLLL), 115 to 135 (LWAIAIALIVFSAVIAAAEYF), 159 to 179 (LALLPGVSRSGATISAGLFLG), 190 to 210 (FLLAIPAVFASGLFSLPDAFA), 222 to 242 (QLLVATVIAFVVGFAAVAWFL), and 253 to 273 (FVGYRVVLGVVVLILLSTGVV).

It belongs to the UppP family.

Its subcellular location is the cell membrane. It carries out the reaction di-trans,octa-cis-undecaprenyl diphosphate + H2O = di-trans,octa-cis-undecaprenyl phosphate + phosphate + H(+). Functionally, catalyzes the dephosphorylation of undecaprenyl diphosphate (UPP). Confers resistance to bacitracin. The protein is Undecaprenyl-diphosphatase of Mycobacterium sp. (strain KMS).